The chain runs to 724 residues: Catalase-peroxidase (724 aa).

The tryptophyl-tyrosyl-methioninium (Trp-Tyr) (with M-252) cross-link spans 98-226 (WHSAGSYRIA…LAAVMMGLIY (129 aa)). The Proton acceptor role is filled by histidine 99. Residues 226–252 (YVNPEGVDGHPDPQKTANDVRVTFARM) constitute a cross-link (tryptophyl-tyrosyl-methioninium (Tyr-Met) (with W-98)). Histidine 267 lines the heme b pocket.

It belongs to the peroxidase family. Peroxidase/catalase subfamily. Homodimer or homotetramer. Heme b is required as a cofactor. Post-translationally, formation of the three residue Trp-Tyr-Met cross-link is important for the catalase, but not the peroxidase activity of the enzyme.

It catalyses the reaction H2O2 + AH2 = A + 2 H2O. The enzyme catalyses 2 H2O2 = O2 + 2 H2O. Bifunctional enzyme with both catalase and broad-spectrum peroxidase activity. This chain is Catalase-peroxidase, found in Edwardsiella tarda.